Reading from the N-terminus, the 279-residue chain is MTFDASGRLPEAFLTPGGSSFMDFLAGHAPDLLPGRRSLGTGDLSKDVPHGTTIVAATFDGGVVMAGDRRATMGNIIAQRDIEKVFPADEYSCVGIAGSAGLAIEMVRLFQVELEHYEKLEGTTLSLDGKANRLSALIRGNLAMAMQGLAVVPLFAGYDHDISGGRIFSYDPTGGRYEEQAFHSVGSGSLFARGSLKKLYRESMSAAECVTATIQALYDAADDDSATGGPDMARRIFPVIGVVTADGYQRMPEAEVGEIVDSVVGARLQRPDGPAAPLS.

Positions 1–51 (MTFDASGRLPEAFLTPGGSSFMDFLAGHAPDLLPGRRSLGTGDLSKDVPHG) are cleaved as a propeptide — removed in mature form; by autocatalysis. Thr52 acts as the Nucleophile in catalysis.

This sequence belongs to the peptidase T1B family. The 20S proteasome core is composed of 14 alpha and 14 beta subunits that assemble into four stacked heptameric rings, resulting in a barrel-shaped structure. The two inner rings, each composed of seven catalytic beta subunits, are sandwiched by two outer rings, each composed of seven alpha subunits. The catalytic chamber with the active sites is on the inside of the barrel. Has a gated structure, the ends of the cylinder being occluded by the N-termini of the alpha-subunits. Is capped by the proteasome-associated ATPase, ARC.

It localises to the cytoplasm. The enzyme catalyses Cleavage of peptide bonds with very broad specificity.. The protein operates within protein degradation; proteasomal Pup-dependent pathway. The formation of the proteasomal ATPase ARC-20S proteasome complex, likely via the docking of the C-termini of ARC into the intersubunit pockets in the alpha-rings, may trigger opening of the gate for substrate entry. Interconversion between the open-gate and close-gate conformations leads to a dynamic regulation of the 20S proteasome proteolysis activity. Functionally, component of the proteasome core, a large protease complex with broad specificity involved in protein degradation. This Kribbella flavida (strain DSM 17836 / JCM 10339 / NBRC 14399) protein is Proteasome subunit beta.